The primary structure comprises 243 residues: Peptidyl-tRNA hydrolase (243 aa).

Tyr14 provides a ligand contact to tRNA. The Proton acceptor role is filled by His19. The tRNA site is built by Phe64, Asn66, and Asn112. Residues 188 to 243 (GGKAEEEKPRKDNKTTEKKPAGQSHIHQARNHNQPKVLTTGPMADILKKMFGNKGE) are disordered. The span at 190–207 (KAEEEKPRKDNKTTEKKP) shows a compositional bias: basic and acidic residues.

This sequence belongs to the PTH family. In terms of assembly, monomer.

The protein resides in the cytoplasm. The enzyme catalyses an N-acyl-L-alpha-aminoacyl-tRNA + H2O = an N-acyl-L-amino acid + a tRNA + H(+). In terms of biological role, hydrolyzes ribosome-free peptidyl-tRNAs (with 1 or more amino acids incorporated), which drop off the ribosome during protein synthesis, or as a result of ribosome stalling. Functionally, catalyzes the release of premature peptidyl moieties from peptidyl-tRNA molecules trapped in stalled 50S ribosomal subunits, and thus maintains levels of free tRNAs and 50S ribosomes. The polypeptide is Peptidyl-tRNA hydrolase (Rhizobium leguminosarum bv. trifolii (strain WSM2304)).